We begin with the raw amino-acid sequence, 372 residues long: Glutamine synthetase (372 aa).

Residues 24-103 (VIAEYVWVDG…VLAECFNSDG (80 aa)) form the GS beta-grasp domain. The GS catalytic domain occupies 110–372 (HRHEANKLFQ…KEYERETNEQ (263 aa)).

Belongs to the glutamine synthetase family. As to quaternary structure, homooctamer.

It is found in the cytoplasm. The enzyme catalyses L-glutamate + NH4(+) + ATP = L-glutamine + ADP + phosphate + H(+). This is Glutamine synthetase (GLN1) from Candida glabrata (strain ATCC 2001 / BCRC 20586 / JCM 3761 / NBRC 0622 / NRRL Y-65 / CBS 138) (Yeast).